The following is a 273-amino-acid chain: WIMGHMVDDIAMVDDFLDNGANGLELDISFDSNGKAEYTYHGTPCDCFRSCTRYESFDKYMEYVREISTPGNQKFRKSLIMLIMYLKLNSLYANQLYTAGSDIADQLARHYWKDDGAARAYMVLSLPSITQTEFIRGFKNRMESQGLQKYYAKIGWDFTGNEDLDDIEATYKKLNITEHIWQSDGITNCLNRGTDRLEDAIRRRDKPGNKYINKVYLWSIDKMSSIRDALDKGVDGIMVNYADRFIDVLKESKYSSKYRLATYEDNPWETFRP.

H5 is an active-site residue. E25 and D27 together coordinate Mg(2+). H41 acts as the Nucleophile in catalysis. 2 disulfides stabilise this stretch: C45-C51 and C47-C189.

Belongs to the arthropod phospholipase D family. Class II subfamily. It depends on Mg(2+) as a cofactor. Expressed by the venom gland.

The protein localises to the secreted. The catalysed reaction is an N-(acyl)-sphingosylphosphocholine = an N-(acyl)-sphingosyl-1,3-cyclic phosphate + choline. It catalyses the reaction an N-(acyl)-sphingosylphosphoethanolamine = an N-(acyl)-sphingosyl-1,3-cyclic phosphate + ethanolamine. The enzyme catalyses a 1-acyl-sn-glycero-3-phosphocholine = a 1-acyl-sn-glycero-2,3-cyclic phosphate + choline. It carries out the reaction a 1-acyl-sn-glycero-3-phosphoethanolamine = a 1-acyl-sn-glycero-2,3-cyclic phosphate + ethanolamine. Dermonecrotic toxins cleave the phosphodiester linkage between the phosphate and headgroup of certain phospholipids (sphingolipid and lysolipid substrates), forming an alcohol (often choline) and a cyclic phosphate. This toxin acts on sphingomyelin (SM). It may also act on ceramide phosphoethanolamine (CPE), lysophosphatidylcholine (LPC) and lysophosphatidylethanolamine (LPE), but not on lysophosphatidylserine (LPS), and lysophosphatidylglycerol (LPG). It acts by transphosphatidylation, releasing exclusively cyclic phosphate products as second products. Induces dermonecrosis, hemolysis, increased vascular permeability, edema, inflammatory response, and platelet aggregation. The polypeptide is Dermonecrotic toxin SdSicTox-betaIF1 (Sicarius cf. damarensis (strain GJB-2008) (Six-eyed sand spider)).